The primary structure comprises 305 residues: tRNA pseudouridine synthase B (305 aa).

The active-site Nucleophile is the Asp-48.

It belongs to the pseudouridine synthase TruB family. Type 1 subfamily.

It catalyses the reaction uridine(55) in tRNA = pseudouridine(55) in tRNA. Its function is as follows. Responsible for synthesis of pseudouridine from uracil-55 in the psi GC loop of transfer RNAs. This Pseudomonas putida (strain GB-1) protein is tRNA pseudouridine synthase B.